The sequence spans 276 residues: NAD-capped RNA hydrolase NudC (276 aa).

Arginine 82 serves as a coordination point for substrate. Cysteine 112 and cysteine 115 together coordinate Zn(2+). Glutamate 125 provides a ligand contact to substrate. Cysteine 130 and cysteine 133 together coordinate Zn(2+). Substrate is bound at residue tyrosine 138. In terms of domain architecture, Nudix hydrolase spans 139 to 262 (PRLSPSMIVL…SIARYLIELY (124 aa)). Alanine 172, glutamate 188, and glutamate 192 together coordinate a divalent metal cation. Positions 173–194 (GYVEPGESVEQCVAREVREEVG) match the Nudix box motif. 206–213 (QGWPFPHS) lines the substrate pocket. An a divalent metal cation-binding site is contributed by glutamate 233. Alanine 255 provides a ligand contact to substrate.

This sequence belongs to the Nudix hydrolase family. NudC subfamily. In terms of assembly, homodimer. Mg(2+) serves as cofactor. Requires Mn(2+) as cofactor. Zn(2+) is required as a cofactor.

The enzyme catalyses a 5'-end NAD(+)-phospho-ribonucleoside in mRNA + H2O = a 5'-end phospho-adenosine-phospho-ribonucleoside in mRNA + beta-nicotinamide D-ribonucleotide + 2 H(+). The catalysed reaction is NAD(+) + H2O = beta-nicotinamide D-ribonucleotide + AMP + 2 H(+). It catalyses the reaction NADH + H2O = reduced beta-nicotinamide D-ribonucleotide + AMP + 2 H(+). In terms of biological role, mRNA decapping enzyme that specifically removes the nicotinamide adenine dinucleotide (NAD) cap from a subset of mRNAs by hydrolyzing the diphosphate linkage to produce nicotinamide mononucleotide (NMN) and 5' monophosphate mRNA. The NAD-cap is present at the 5'-end of some mRNAs and stabilizes RNA against 5'-processing. Has preference for mRNAs with a 5'-end purine. Catalyzes the hydrolysis of a broad range of dinucleotide pyrophosphates. This chain is NAD-capped RNA hydrolase NudC, found in Stutzerimonas stutzeri (strain A1501) (Pseudomonas stutzeri).